The following is a 331-amino-acid chain: MLIAQRPTLTEESISEFRSRFVIEPLEPGFGYTLGNSLRRTLLSSIPGAAVTSIRIDGVLHEFSTVPGVKEDVTEIILNIKGLVVSSEHDEPITAYLRKQGAGQVTAADISAPAGVEIHNPELVIATLNEKAKFELELTIERGRGYVSATQNRSEFSEAGQIPVDSIYSPVLKVTYRVEATRAGERTDFDRLVVDVETKSAITPRDAIASAGRTLTELFGLARELNSAAEGIEIGPAPVDAVLSSELSMPIEDLDLSVRSYNCLKREGINNVSELVALSETQLMNIRNFGQKSVDEVKDKLVELGLSLKDAVPGFDGAHYYSYDEDETTTN.

The segment at 1 to 226 (MLIAQRPTLT…ELFGLARELN (226 aa)) is alpha N-terminal domain (alpha-NTD). The interval 243 to 331 (LSSELSMPIE…SYDEDETTTN (89 aa)) is alpha C-terminal domain (alpha-CTD).

The protein belongs to the RNA polymerase alpha chain family. Homodimer. The RNAP catalytic core consists of 2 alpha, 1 beta, 1 beta' and 1 omega subunit. When a sigma factor is associated with the core the holoenzyme is formed, which can initiate transcription.

It catalyses the reaction RNA(n) + a ribonucleoside 5'-triphosphate = RNA(n+1) + diphosphate. In terms of biological role, DNA-dependent RNA polymerase catalyzes the transcription of DNA into RNA using the four ribonucleoside triphosphates as substrates. This chain is DNA-directed RNA polymerase subunit alpha, found in Clavibacter michiganensis subsp. michiganensis (strain NCPPB 382).